The primary structure comprises 137 residues: Endoribonuclease YbeY (137 aa).

H105, H109, and D115 together coordinate Zn(2+).

It belongs to the endoribonuclease YbeY family. Requires Zn(2+) as cofactor.

The protein resides in the cytoplasm. Single strand-specific metallo-endoribonuclease involved in late-stage 70S ribosome quality control and in maturation of the 3' terminus of the 16S rRNA. The polypeptide is Endoribonuclease YbeY (Chlorobium luteolum (strain DSM 273 / BCRC 81028 / 2530) (Pelodictyon luteolum)).